The following is a 151-amino-acid chain: Regulatory protein RecX (151 aa).

The protein belongs to the RecX family.

The protein localises to the cytoplasm. Functionally, modulates RecA activity. In Haemophilus ducreyi (strain 35000HP / ATCC 700724), this protein is Regulatory protein RecX.